The sequence spans 215 residues: Large ribosomal subunit protein uL3c (215 aa).

The disordered stretch occupies residues 132–151; that stretch reads RGAMSHGSKSHRRPGSIGAG.

Belongs to the universal ribosomal protein uL3 family. Part of the 50S ribosomal subunit.

The protein resides in the plastid. The protein localises to the chloroplast. Functionally, one of the primary rRNA binding proteins, it binds directly near the 3'-end of the 23S rRNA, where it nucleates assembly of the 50S subunit. In Cyanidium caldarium (Red alga), this protein is Large ribosomal subunit protein uL3c (rpl3).